Here is a 291-residue protein sequence, read N- to C-terminus: Ribosomal RNA small subunit methyltransferase I (291 aa).

Belongs to the methyltransferase superfamily. RsmI family.

It is found in the cytoplasm. The enzyme catalyses cytidine(1402) in 16S rRNA + S-adenosyl-L-methionine = 2'-O-methylcytidine(1402) in 16S rRNA + S-adenosyl-L-homocysteine + H(+). Functionally, catalyzes the 2'-O-methylation of the ribose of cytidine 1402 (C1402) in 16S rRNA. This chain is Ribosomal RNA small subunit methyltransferase I, found in Neisseria meningitidis serogroup B (strain ATCC BAA-335 / MC58).